Reading from the N-terminus, the 222-residue chain is Probable transaldolase 2 (222 aa).

Lys90 functions as the Schiff-base intermediate with substrate in the catalytic mechanism.

This sequence belongs to the transaldolase family. Type 3B subfamily.

The protein resides in the cytoplasm. The enzyme catalyses D-sedoheptulose 7-phosphate + D-glyceraldehyde 3-phosphate = D-erythrose 4-phosphate + beta-D-fructose 6-phosphate. It functions in the pathway carbohydrate degradation; pentose phosphate pathway; D-glyceraldehyde 3-phosphate and beta-D-fructose 6-phosphate from D-ribose 5-phosphate and D-xylulose 5-phosphate (non-oxidative stage): step 2/3. Transaldolase is important for the balance of metabolites in the pentose-phosphate pathway. The polypeptide is Probable transaldolase 2 (Bacillus anthracis).